We begin with the raw amino-acid sequence, 210 residues long: Regulator of G-protein signaling 17 (210 aa).

The disordered stretch occupies residues 1-21; that stretch reads MRKRQQSQNEGTSAVSQAPGN. An RGS domain is found at 84–200; the sequence is NFDKMMKTPA…LNSQIYKSLV (117 aa).

As to quaternary structure, interacts with GNAI1 and GNAQ. Interacts with GNAZ and GNAI2. Forms a complex with mu-opioid receptors and G(alpha)z/i2 subunits, including GNAZ and GNAI2; the formation of this complex results in mu-opioid receptor desensitization. In terms of processing, N- and O-glycosylated in synapsomal membranes. Serine phosphorylated in synapsomal membranes. Post-translationally, sumoylated with SUMO1 and SUM02 in synaptosomes. The sumoylated forms act as a scaffold for sequestering mu-opioid receptor-activated G(alpha) subunits.

The protein localises to the membrane. The protein resides in the synapse. Its subcellular location is the synaptosome. It localises to the nucleus. It is found in the cytoplasm. In terms of biological role, regulates G protein-coupled receptor signaling cascades, including signaling via muscarinic acetylcholine receptor CHRM2 and dopamine receptor DRD2. Inhibits signal transduction by increasing the GTPase activity of G protein alpha subunits, thereby driving them into their inactive GDP-bound form. Binds selectively to GNAZ and GNAI2 subunits, accelerates their GTPase activity and regulates their signaling activities. Negatively regulates mu-opioid receptor-mediated activation of the G-proteins. This chain is Regulator of G-protein signaling 17 (RGS17), found in Gallus gallus (Chicken).